Reading from the N-terminus, the 73-residue chain is UPF0154 protein PEPE_0872 (73 aa).

A helical membrane pass occupies residues 5 to 25; it reads IWIMIVIIALLVGAVGGFFFA.

It belongs to the UPF0154 family.

It is found in the cell membrane. This is UPF0154 protein PEPE_0872 from Pediococcus pentosaceus (strain ATCC 25745 / CCUG 21536 / LMG 10740 / 183-1w).